Reading from the N-terminus, the 412-residue chain is Subtilisin-like protease 6 (412 aa).

The signal sequence occupies residues M1 to G20. A propeptide spanning residues A21 to N126 is cleaved from the precursor. The Inhibitor I9 domain occupies K36–T120. Residues N123 and N126 are each glycosylated (N-linked (GlcNAc...) asparagine). The Peptidase S8 domain occupies S135–K412. Residues D167 and H198 each act as charge relay system in the active site. N252 and N264 each carry an N-linked (GlcNAc...) asparagine glycan. The active-site Charge relay system is the S358. A glycan (N-linked (GlcNAc...) asparagine) is linked at N408.

Belongs to the peptidase S8 family.

Its subcellular location is the secreted. Its function is as follows. Secreted subtilisin-like serine protease with keratinolytic activity that contributes to pathogenicity. In Trichophyton equinum (Horse ringworm fungus), this protein is Subtilisin-like protease 6 (SUB6).